The chain runs to 426 residues: C4-dicarboxylate transport protein (426 aa).

Transmembrane regions (helical) follow at residues 8 to 28 (VLYV…HFYP), 44 to 64 (LIKM…IAGM), 78 to 98 (LLYF…ATHL), 148 to 168 (GEIL…AHVG), 184 to 204 (ILFG…FGAM), 222 to 242 (LIGT…GFIA), 297 to 317 (GYSF…LFIA), and 355 to 375 (AATL…ILGI).

It belongs to the dicarboxylate/amino acid:cation symporter (DAACS) (TC 2.A.23) family.

The protein resides in the cell inner membrane. Responsible for the transport of dicarboxylates such as succinate, fumarate, and malate from the periplasm across the membrane. This Paraburkholderia phymatum (strain DSM 17167 / CIP 108236 / LMG 21445 / STM815) (Burkholderia phymatum) protein is C4-dicarboxylate transport protein.